We begin with the raw amino-acid sequence, 1366 residues long: DNA-directed RNA polymerase subunit beta' (1366 aa).

The segment covering 1–23 has biased composition (basic residues); sequence MTSSKPKKSSRVRKTSKNSKKNN. A disordered region spans residues 1-25; sequence MTSSKPKKSSRVRKTSKNSKKNNKI. Zn(2+) is bound by residues Cys248, Cys315, Cys322, and Cys325. The interval 1290–1366 is disordered; that stretch reads DYTVDMPQSP…LQEEGLLSDE (77 aa). Residues 1295–1305 are compositionally biased toward polar residues; that stretch reads MPQSPTVSSTA. Low complexity predominate over residues 1354-1366; the sequence is LEGLQEEGLLSDE.

It belongs to the RNA polymerase beta' chain family. RpoC2 subfamily. In terms of assembly, in cyanobacteria the RNAP catalytic core is composed of 2 alpha, 1 beta, 1 beta', 1 gamma and 1 omega subunit. When a sigma factor is associated with the core the holoenzyme is formed, which can initiate transcription. Zn(2+) serves as cofactor.

The catalysed reaction is RNA(n) + a ribonucleoside 5'-triphosphate = RNA(n+1) + diphosphate. In terms of biological role, DNA-dependent RNA polymerase catalyzes the transcription of DNA into RNA using the four ribonucleoside triphosphates as substrates. This is DNA-directed RNA polymerase subunit beta' from Prochlorococcus marinus (strain MIT 9515).